Reading from the N-terminus, the 383-residue chain is Serine protease 23 (383 aa).

The signal sequence occupies residues 1–19; the sequence is MAGIPGLLFLLFFLLCAVG. Asparagine 93 is a glycosylation site (N-linked (GlcNAc...) asparagine). Serine 109 is subject to Phosphoserine; by FAM20C. A disulfide bond links cysteine 160 and cysteine 176. Residue histidine 175 is the Charge relay system of the active site. Residue asparagine 207 is glycosylated (N-linked (GlcNAc...) asparagine). Active-site charge relay system residues include aspartate 240 and serine 316.

The protein belongs to the peptidase S1 family.

Its subcellular location is the secreted. The sequence is that of Serine protease 23 (PRSS23) from Homo sapiens (Human).